A 417-amino-acid polypeptide reads, in one-letter code: Serine hydroxymethyltransferase (417 aa).

(6S)-5,6,7,8-tetrahydrofolate contacts are provided by residues Leu-121 and 125–127 (GHL). N6-(pyridoxal phosphate)lysine is present on Lys-229. 355–357 (SPF) contributes to the (6S)-5,6,7,8-tetrahydrofolate binding site.

This sequence belongs to the SHMT family. Homodimer. It depends on pyridoxal 5'-phosphate as a cofactor.

It localises to the cytoplasm. It catalyses the reaction (6R)-5,10-methylene-5,6,7,8-tetrahydrofolate + glycine + H2O = (6S)-5,6,7,8-tetrahydrofolate + L-serine. The protein operates within one-carbon metabolism; tetrahydrofolate interconversion. Its pathway is amino-acid biosynthesis; glycine biosynthesis; glycine from L-serine: step 1/1. Its function is as follows. Catalyzes the reversible interconversion of serine and glycine with tetrahydrofolate (THF) serving as the one-carbon carrier. This reaction serves as the major source of one-carbon groups required for the biosynthesis of purines, thymidylate, methionine, and other important biomolecules. Also exhibits THF-independent aldolase activity toward beta-hydroxyamino acids, producing glycine and aldehydes, via a retro-aldol mechanism. In Xanthomonas axonopodis pv. citri (strain 306), this protein is Serine hydroxymethyltransferase.